The following is a 32-amino-acid chain: Cyclotide glopa A (32 aa).

A cross-link (cyclopeptide (Gly-Asn)) is located at residues 1–32 (GGSIPCIETCVWTGCFLVPGCSCKSDKKCYLN). Intrachain disulfides connect Cys-6/Cys-21, Cys-10/Cys-23, and Cys-15/Cys-29.

Post-translationally, this is a cyclic peptide.

Probably participates in a plant defense mechanism. This is Cyclotide glopa A from Gloeospermum pauciflorum.